We begin with the raw amino-acid sequence, 982 residues long: Glutamate [NMDA] receptor subunit 1 (982 aa).

The first 16 residues, 1–16 (MAFAVWFLSTFVIVAA), serve as a signal peptide directing secretion. The Extracellular portion of the chain corresponds to 17 to 561 (QRHMALEHEG…TLVSFLQPFS (545 aa)). N-linked (GlcNAc...) asparagine glycans are attached at residues asparagine 247, asparagine 303, asparagine 334, asparagine 386, asparagine 443, asparagine 470, and asparagine 490. Residues 518–520 (PLT) and arginine 525 contribute to the glycine site. The chain crosses the membrane as a helical span at residues 562–582 (NTLWILVMVSVHVVALVLYLL). The Cytoplasmic segment spans residues 583–639 (DRFSPFGRFKLSHSDSNEEKALNLSSAVWFAWGVLLNSGIGEGTPRSFSARVLGMVW). Residues 640 to 660 (AGFAMIIVASYTANLAAFLVL) form a helical membrane-spanning segment. The Extracellular portion of the chain corresponds to 661–819 (ERPKTKLSGI…KTPNTLGLKN (159 aa)). N-linked (GlcNAc...) asparagine glycosylation is present at asparagine 681. Serine 691 and aspartate 735 together coordinate glycine. The helical transmembrane segment at 820–840 (MAGVFILVGVGIAGGVGLIII) threads the bilayer. The Cytoplasmic portion of the chain corresponds to 841–982 (EVIYKKHQVK…YTSDVSHLVV (142 aa)). A disordered region spans residues 934–982 (EIGKPGQSPKVIGGPPHPMLGKTRPQAQQNLLPPRYSPGYTSDVSHLVV). The span at 972–982 (GYTSDVSHLVV) shows a compositional bias: polar residues.

This sequence belongs to the glutamate-gated ion channel (TC 1.A.10.1) family. Forms a heteromeric NMDA channel with Nmdar2.

The protein resides in the cell membrane. It is found in the postsynaptic cell membrane. The protein localises to the postsynaptic density. Functionally, NMDA receptor subtype of glutamate-gated ion channels with high calcium permeability and voltage-dependent sensitivity to magnesium. Mediated by glycine. This protein plays a key role in synaptic plasticity, synaptogenesis, excitotoxicity, memory acquisition and learning. It mediates neuronal functions in glutamate neurotransmission. Is involved in the cell surface targeting of NMDA receptors. Plays a role in associative learning and in long-term memory consolidation. The sequence is that of Glutamate [NMDA] receptor subunit 1 from Drosophila willistoni (Fruit fly).